Reading from the N-terminus, the 305-residue chain is RxLR effector protein 17 (305 aa).

The N-terminal stretch at methionine 1–glycine 24 is a signal peptide. The short motif at arginine 45–arginine 60 is the RxLR-dEER element. N-linked (GlcNAc...) asparagine glycosylation is found at asparagine 207 and asparagine 227. The w motif stretch occupies residues leucine 247–leucine 269.

The protein belongs to the RxLR effector family. As to quaternary structure, interacts with host A.thaliana At1G14340.

Its subcellular location is the secreted. The protein resides in the host cell membrane. Secreted effector that confers enhanced plant susceptibility during both compatible and incompatible interactions between the pathogen and its host. Promotes the sexual reproduction of the pathogen in the plant host. This is RxLR effector protein 17 from Hyaloperonospora arabidopsidis (strain Emoy2) (Downy mildew agent).